The sequence spans 118 residues: DNA mimic protein DMP12 (118 aa).

Belongs to the DMP12-like protein family. Monomer. Interacts with the dimeric form of the DNA-binding protein HU.

Acts as a DNA mimic. Interacts with the DNA-binding protein HU and partially prevents the binding of HU protein to DNA by occupying the DNA binding sites on the protein. However, the relatively weak affinity of DMP12 for HU suggests that it may not completely block the HU protein-DNA binding, and that DMP12 is more likely to act as a regulator than a competitive inhibitor. It protects HU protein from limited digestion by trypsin in a limited trypsin digestion assay, suggesting that it may serve to protect the HU protein and improve the stability of unbound HU protein. This is DNA mimic protein DMP12 from Neisseria meningitidis serogroup B (strain ATCC BAA-335 / MC58).